The sequence spans 181 residues: Protein Syd (181 aa).

Belongs to the Syd family.

Its subcellular location is the cell inner membrane. In terms of biological role, interacts with the SecY protein in vivo. May bind preferentially to an uncomplexed state of SecY, thus functioning either as a chelating agent for excess SecY in the cell or as a regulatory factor that negatively controls the translocase function. The chain is Protein Syd from Klebsiella pneumoniae subsp. pneumoniae (strain ATCC 700721 / MGH 78578).